The sequence spans 93 residues: Acylphosphatase (93 aa).

An Acylphosphatase-like domain is found at 6–93 (RAIVTVKGLV…GEFDTFDVRY (88 aa)). Active-site residues include Arg21 and Asn39.

The protein belongs to the acylphosphatase family.

It catalyses the reaction an acyl phosphate + H2O = a carboxylate + phosphate + H(+). The chain is Acylphosphatase (acyP) from Geobacter metallireducens (strain ATCC 53774 / DSM 7210 / GS-15).